A 311-amino-acid chain; its full sequence is Bifunctional protein FolD (311 aa).

Position 174–176 (174–176) interacts with NADP(+); it reads GKG.

The protein belongs to the tetrahydrofolate dehydrogenase/cyclohydrolase family. As to quaternary structure, homodimer.

The enzyme catalyses (6R)-5,10-methylene-5,6,7,8-tetrahydrofolate + NADP(+) = (6R)-5,10-methenyltetrahydrofolate + NADPH. The catalysed reaction is (6R)-5,10-methenyltetrahydrofolate + H2O = (6R)-10-formyltetrahydrofolate + H(+). Its pathway is one-carbon metabolism; tetrahydrofolate interconversion. Functionally, catalyzes the oxidation of 5,10-methylenetetrahydrofolate to 5,10-methenyltetrahydrofolate and then the hydrolysis of 5,10-methenyltetrahydrofolate to 10-formyltetrahydrofolate. The chain is Bifunctional protein FolD from Pyrobaculum aerophilum (strain ATCC 51768 / DSM 7523 / JCM 9630 / CIP 104966 / NBRC 100827 / IM2).